We begin with the raw amino-acid sequence, 181 residues long: MKQILDFIPLIIFFALYKMYDIYTATGALIIATAIQLVVTYALYKKVEKMQLITFIMVTVFGGMTIFLHDDNFIKWKVTIVYCVFAAGLIIAHILGKPVIKGMLGKEVTLPDDKWAKINHAWVLFFTVCAIANLYVAFEMPLDVWVNFKVFGLLGLTFLYTLFTGMYVYKHMPKEKKEEQE.

The next 5 membrane-spanning stretches (helical) occupy residues 22–42, 50–70, 80–100, 122–142, and 148–168; these read IYTATGALIIATAIQLVVTYA, MQLITFIMVTVFGGMTIFLHD, IVYCVFAAGLIIAHILGKPVI, WVLFFTVCAIANLYVAFEMPL, and FKVFGLLGLTFLYTLFTGMYV.

The protein belongs to the YciB family.

It localises to the cell inner membrane. Functionally, plays a role in cell envelope biogenesis, maintenance of cell envelope integrity and membrane homeostasis. The sequence is that of Inner membrane-spanning protein YciB from Aliivibrio fischeri (strain MJ11) (Vibrio fischeri).